We begin with the raw amino-acid sequence, 603 residues long: DNA mismatch repair protein MutL (603 aa).

This sequence belongs to the DNA mismatch repair MutL/HexB family.

In terms of biological role, this protein is involved in the repair of mismatches in DNA. It is required for dam-dependent methyl-directed DNA mismatch repair. May act as a 'molecular matchmaker', a protein that promotes the formation of a stable complex between two or more DNA-binding proteins in an ATP-dependent manner without itself being part of a final effector complex. The polypeptide is DNA mismatch repair protein MutL (Sphingopyxis alaskensis (strain DSM 13593 / LMG 18877 / RB2256) (Sphingomonas alaskensis)).